Consider the following 88-residue polypeptide: C-C motif chemokine 18 (88 aa).

The N-terminal stretch at 1 to 19 (MKGLAAALLVLCTVALCSC) is a signal peptide. Cystine bridges form between cysteine 29/cysteine 53 and cysteine 30/cysteine 69.

It belongs to the intercrine beta (chemokine CC) family. The Cys-29/Cys-53 disulfide bond is required for activity.

The protein resides in the secreted. Chemotactic factor that attracts lymphocytes but not monocytes or granulocytes. May be involved in B-cell migration into B-cell follicles in lymph nodes. Attracts naive T-lymphocytes toward dendritic cells and activated macrophages in lymph nodes, has chemotactic activity for naive T-cells, CD4+ and CD8+ T-cells and thus may play a role in both humoral and cell-mediated immunity responses. The sequence is that of C-C motif chemokine 18 (CCL18) from Macaca mulatta (Rhesus macaque).